Here is a 274-residue protein sequence, read N- to C-terminus: 3-deoxy-manno-octulosonate cytidylyltransferase (274 aa).

It belongs to the KdsB family.

It localises to the cytoplasm. The enzyme catalyses 3-deoxy-alpha-D-manno-oct-2-ulosonate + CTP = CMP-3-deoxy-beta-D-manno-octulosonate + diphosphate. It functions in the pathway nucleotide-sugar biosynthesis; CMP-3-deoxy-D-manno-octulosonate biosynthesis; CMP-3-deoxy-D-manno-octulosonate from 3-deoxy-D-manno-octulosonate and CTP: step 1/1. It participates in bacterial outer membrane biogenesis; lipopolysaccharide biosynthesis. Functionally, activates KDO (a required 8-carbon sugar) for incorporation into bacterial lipopolysaccharide in Gram-negative bacteria. This Bordetella avium (strain 197N) protein is 3-deoxy-manno-octulosonate cytidylyltransferase.